Here is a 1589-residue protein sequence, read N- to C-terminus: Mediator of RNA polymerase II transcription subunit 23 (1589 aa).

The interval Tyr1381–Gln1499 is disordered. Over residues Thr1392–Glu1410 the composition is skewed to basic and acidic residues. Low complexity predominate over residues Leu1457–Met1470.

The protein belongs to the Mediator complex subunit 23 family. In terms of assembly, component of the Mediator complex.

It is found in the nucleus. Functionally, component of the Mediator complex, a coactivator involved in the regulated transcription of nearly all RNA polymerase II-dependent genes. Mediator functions as a bridge to convey information from gene-specific regulatory proteins to the basal RNA polymerase II transcription machinery. Mediator is recruited to promoters by direct interactions with regulatory proteins and serves as a scaffold for the assembly of a functional preinitiation complex with RNA polymerase II and the general transcription factors. This chain is Mediator of RNA polymerase II transcription subunit 23 (sur-2), found in Caenorhabditis briggsae.